The primary structure comprises 508 residues: Cytochrome P450 monooxygenase orf4 (508 aa).

Cys-447 serves as a coordination point for heme.

It belongs to the cytochrome P450 family. Heme is required as a cofactor.

The protein operates within mycotoxin biosynthesis. Functionally, cytochrome P450 monooxygenase; part of the gene cluster that mediates the biosynthesis of brefeldin A (BFA), a protein transport inhibitor that shows antiviral, antifungal, and antitumor properties. The proposed biosynthesis of BFA involves formation of an acyclic polyketide chain that is differentially tailored throughout the backbone. The highly reducing polyketide synthase Bref-PKS is proposed to synthesize the precisely reduced octaketide precursor, which could then be directly offloaded by the thiohydrolase enzyme Bref-TH followed by a cytochrome P450 monooxygenase-mediated formation of the cyclopentane ring and macrocyclization to afford 7-deoxy BFA. Alternatively, the first ring annulation can also occur on the ACP-tethered intermediate before the thiohydrolase release and lactonization. The C7-hydroxylation by another cytochrome P450 monooxygenase is believed to be the final step in the process to obtain the final structure of BFA. In addition to the HRPKS Bref-PKS and the thiohydrolase Bref-TH, the brefeldin A biosynthesis cluster contains 4 cytochrome p450 monooxygenases (called orf3 to orf6), as well a the probable cluster-specific transcription regulator orf8. This is Cytochrome P450 monooxygenase orf4 from Eupenicillium brefeldianum (Penicillium brefeldianum).